Consider the following 345-residue polypeptide: Krueppel-like factor 3 (345 aa).

The segment at 1–74 (MLMFDPVPVK…TVNKRSSPPS (74 aa)) is repressor domain. Lys-10 participates in a covalent cross-link: Glycyl lysine isopeptide (Lys-Gly) (interchain with G-Cter in SUMO). The 9aaTAD; inactive signature appears at 60-68 (EPVDLTVNK). A CTBP-binding motif motif is present at residues 61-65 (PVDLT). The segment at 66-112 (VNKRSSPPSAGNSPSSLKFPSSHRRASPGLSMPSSSPPIKKYSPPSP) is disordered. Lys-68 is covalently cross-linked (Glycyl lysine isopeptide (Lys-Gly) (interchain with G-Cter in SUMO2)). Low complexity-rich tracts occupy residues 70-81 (SSPPSAGNSPSS) and 92-108 (SPGLSMPSSSPPIKKYS). Residues Ser-71, Ser-92, Ser-101, Ser-108, and Ser-111 each carry the phosphoserine modification. Residues Lys-196 and Lys-198 each participate in a glycyl lysine isopeptide (Lys-Gly) (interchain with G-Cter in SUMO2) cross-link. Phosphoserine is present on residues Ser-216, Ser-224, and Ser-250. 3 C2H2-type zinc fingers span residues 260–284 (HRCDYDGCNKVYTKSSHLKAHRRTH), 290–314 (YKCTWEGCTWKFARSDELTRHFRKH), and 320–342 (FQCPDCDRSFSRSDHLALHRKRH).

It belongs to the krueppel C2H2-type zinc-finger protein family. Monomer. Sumoylated with SUMO1. Sumoylation is enhanced by PIAS1, PIAS2alpha and PIAS2beta, and PIAS4, but not by Pc2. Enhances transcriptional repression, but has no effect on DNA binding. Sumoylation on Lys-198 is the major site.

Its subcellular location is the nucleus. Functionally, binds to the CACCC box of erythroid cell-expressed genes. May play a role in hematopoiesis. The sequence is that of Krueppel-like factor 3 (KLF3) from Homo sapiens (Human).